The sequence spans 494 residues: Acetylcholine receptor subunit epsilon (494 aa).

Positions 1–20 (MTMALLGTLLLLALFGRSQG) are cleaved as a signal peptide. Residues 21-239 (KNEELSLYHH…VIYTLIIRRK (219 aa)) lie on the Extracellular side of the membrane. N-linked (GlcNAc...) asparagine glycosylation is found at Asn86 and Asn161. Cys148 and Cys162 are oxidised to a cystine. Residues 240–264 (PLFYVINIIVPCVLISGLVLLAYFL) traverse the membrane as a helical segment. Residues 265-272 (PAQAGGQK) lie on the Cytoplasmic side of the membrane. The helical transmembrane segment at 273 to 291 (CTVSINVLLAQTVFLFLIA) threads the bilayer. At 292 to 306 (QKIPETSLSVPLLGR) the chain is on the extracellular side. Residues 307-328 (YLIFVMVVATLIVMNCVIVLNV) traverse the membrane as a helical segment. At 329 to 457 (SLRTPTTHAT…WVRMGKALDN (129 aa)) the chain is on the cytoplasmic side. A helical transmembrane segment spans residues 458 to 481 (VCFWAALVLFSVGSTLIFLGGYFN). At 482-494 (QVPDLPYPPCIQP) the chain is on the extracellular side.

This sequence belongs to the ligand-gated ion channel (TC 1.A.9) family. Acetylcholine receptor (TC 1.A.9.1) subfamily. Epsilon/CHRNE sub-subfamily. In terms of assembly, pentamer of two alpha chains, and one each of the beta, delta, and gamma (in immature muscle) or epsilon (in mature muscle) chains. The muscle heteropentamer composed of alpha-1, beta-1, delta, epsilon subunits interacts with the alpha-conotoxin ImII.

The protein resides in the postsynaptic cell membrane. Its subcellular location is the cell membrane. The catalysed reaction is K(+)(in) = K(+)(out). It catalyses the reaction Na(+)(in) = Na(+)(out). In terms of biological role, after binding acetylcholine, the AChR responds by an extensive change in conformation that affects all subunits and leads to opening of an ion-conducting channel across the plasma membrane. The protein is Acetylcholine receptor subunit epsilon (Chrne) of Rattus norvegicus (Rat).